A 530-amino-acid polypeptide reads, in one-letter code: FSD1-like protein (530 aa).

The residue at position 1 (methionine 1) is an N-acetylmethionine. A coiled-coil region spans residues 102–141; that stretch reads KQEQARKSQELQSQISQCNNALENSEELLEFATRSLDIKE. Residues 137 to 194 enclose the COS domain; the sequence is LDIKEPEEFSKAARQIKDRVTMASAFRLSLKPKVSDNMTHLMVDFSQERQMLQTLKFL. Residues 196–300 form the Fibronectin type-III domain; sequence VPKAPEIDPV…DPVTLETKAL (105 aa). Positions 300–506 constitute a B30.2/SPRY domain; that stretch reads LNFNLDNSSS…LSTGMQVPSA (207 aa). Residues 322-366 are disordered; that stretch reads WDPTGGKGQESKIKGKENKGRSGTPSPKRTSVGSRPPAVRGSRDR. The span at 330 to 341 shows a compositional bias: basic and acidic residues; it reads QESKIKGKENKG. The segment covering 342–354 has biased composition (polar residues); it reads RSGTPSPKRTSVG. Phosphoserine is present on residues serine 520 and serine 523.

The polypeptide is FSD1-like protein (FSD1L) (Homo sapiens (Human)).